The primary structure comprises 185 residues: Elongation factor P (185 aa).

This sequence belongs to the elongation factor P family.

The protein localises to the cytoplasm. It participates in protein biosynthesis; polypeptide chain elongation. Functionally, involved in peptide bond synthesis. Stimulates efficient translation and peptide-bond synthesis on native or reconstituted 70S ribosomes in vitro. Probably functions indirectly by altering the affinity of the ribosome for aminoacyl-tRNA, thus increasing their reactivity as acceptors for peptidyl transferase. The protein is Elongation factor P of Staphylococcus epidermidis (strain ATCC 35984 / DSM 28319 / BCRC 17069 / CCUG 31568 / BM 3577 / RP62A).